Consider the following 225-residue polypeptide: Imidazoleglycerol-phosphate dehydratase (225 aa).

The protein belongs to the imidazoleglycerol-phosphate dehydratase family.

It carries out the reaction D-erythro-1-(imidazol-4-yl)glycerol 3-phosphate = 3-(imidazol-4-yl)-2-oxopropyl phosphate + H2O. It participates in amino-acid biosynthesis; L-histidine biosynthesis; L-histidine from 5-phospho-alpha-D-ribose 1-diphosphate: step 6/9. This is Imidazoleglycerol-phosphate dehydratase (PTH3) from Pyricularia oryzae (strain 70-15 / ATCC MYA-4617 / FGSC 8958) (Rice blast fungus).